Here is a 307-residue protein sequence, read N- to C-terminus: Dihydroorotate dehydrogenase B (NAD(+)), catalytic subunit (307 aa).

FMN is bound by residues S22 and 46–47 (KA). Substrate-binding positions include K46 and 70-74 (NAIGL). FMN-binding residues include N102 and N130. Residue N130 participates in substrate binding. The active-site Nucleophile is C133. K168 and I194 together coordinate FMN. A substrate-binding site is contributed by 195–196 (NT). FMN is bound by residues G220, 246 to 247 (GG), and 268 to 269 (GT).

The protein belongs to the dihydroorotate dehydrogenase family. Type 1 subfamily. As to quaternary structure, heterotetramer of 2 PyrK and 2 PyrD type B subunits. FMN serves as cofactor.

The protein resides in the cytoplasm. It catalyses the reaction (S)-dihydroorotate + NAD(+) = orotate + NADH + H(+). The protein operates within pyrimidine metabolism; UMP biosynthesis via de novo pathway; orotate from (S)-dihydroorotate (NAD(+) route): step 1/1. Its function is as follows. Catalyzes the conversion of dihydroorotate to orotate with NAD(+) as electron acceptor. The polypeptide is Dihydroorotate dehydrogenase B (NAD(+)), catalytic subunit (pyrD) (Latilactobacillus sakei subsp. sakei (strain 23K) (Lactobacillus sakei subsp. sakei)).